The chain runs to 408 residues: Histidine--tRNA ligase (408 aa).

Belongs to the class-II aminoacyl-tRNA synthetase family. As to quaternary structure, homodimer.

It localises to the cytoplasm. It catalyses the reaction tRNA(His) + L-histidine + ATP = L-histidyl-tRNA(His) + AMP + diphosphate + H(+). The protein is Histidine--tRNA ligase of Campylobacter jejuni subsp. jejuni serotype O:2 (strain ATCC 700819 / NCTC 11168).